A 141-amino-acid polypeptide reads, in one-letter code: MLTVEDILAILPHRPPFLLVDRILEIEDGLRAVGLKNVTMNEPFFVGHFPGRPVMPGVLIVEALAQVGAVIILRQPEYVGKIVMFAGIDDFRFKRPVTPGDTLKLEVSLDKMRRRIGKGQAKATVDGTVVAEGGLMFAIVD.

Residue H48 is part of the active site.

The protein belongs to the thioester dehydratase family. FabZ subfamily.

It localises to the cytoplasm. It catalyses the reaction a (3R)-hydroxyacyl-[ACP] = a (2E)-enoyl-[ACP] + H2O. Involved in unsaturated fatty acids biosynthesis. Catalyzes the dehydration of short chain beta-hydroxyacyl-ACPs and long chain saturated and unsaturated beta-hydroxyacyl-ACPs. The chain is 3-hydroxyacyl-[acyl-carrier-protein] dehydratase FabZ from Herpetosiphon aurantiacus (strain ATCC 23779 / DSM 785 / 114-95).